A 1366-amino-acid chain; its full sequence is Agglutinin-like protein 6 (1366 aa).

An N-terminal signal peptide occupies residues 1-18; that stretch reads MKTVILLHLFFYCTIAMA. 4 disulfide bridges follow: Cys-74–Cys-151, Cys-97–Cys-113, Cys-206–Cys-301, and Cys-228–Cys-257. Residue Asn-294 is glycosylated (N-linked (GlcNAc...) asparagine). ALS repeat units follow at residues 368 to 399, 404 to 435, 441 to 472, 477 to 508, 513 to 544, and 549 to 580; these read TTIT…VDVP, TTIT…VQVP, VTTT…IKEP, VTTT…VREP, and VTTT…IHDP. The interval 449-470 is disordered; it reads GSVPTTETVTTGPQGTDSVIIK. Low complexity predominate over residues 451–464; it reads VPTTETVTTGPQGT. 3 disordered regions span residues 583–658, 758–780, and 804–833; these read ESSS…TSES, LSSD…FPHT, and VSLT…SDQS. Residue Asn-596 is glycosylated (N-linked (GlcNAc...) asparagine). Composition is skewed to low complexity over residues 758 to 775 and 805 to 833; these read LSSD…SPSD and SLTS…SDQS. Asn-866 carries an N-linked (GlcNAc...) asparagine glycan. Disordered regions lie at residues 874–915, 928–976, 996–1040, 1081–1130, and 1158–1218; these read ESES…STVT, TGMP…TSAS, SETS…KESS, EDNE…VSSV, and ETSL…STNN. Composition is skewed to low complexity over residues 875–889, 898–915, and 940–958; these read SESS…ASES, SEST…STVT, and TSDV…PTSA. Residues 959–969 are compositionally biased toward polar residues; it reads EQSITDNPNID. Over residues 996–1021 the composition is skewed to low complexity; sequence SETSTLSSDDSTSSDTSISSTTNSDT. 2 stretches are compositionally biased toward polar residues: residues 1022–1040 and 1085–1107; these read GNIN…KESS and PNTF…SVLS. 2 stretches are compositionally biased toward low complexity: residues 1121–1130 and 1158–1177; these read VTDTTTVSSV and ETSL…SSGT. 2 stretches are compositionally biased toward polar residues: residues 1192–1202 and 1209–1218; these read TSTDNRLSYST and TYANSGSTNN. N-linked (GlcNAc...) asparagine glycosylation is present at Asn-1273. A lipid anchor (GPI-anchor amidated serine) is attached at Ser-1345. A propeptide spans 1346-1366 (removed in mature form); the sequence is SATKHPSWLLKFISVALFFFL.

Belongs to the ALS family. In terms of processing, the GPI-anchor is attached to the protein in the endoplasmic reticulum and serves to target the protein to the cell surface. There, the glucosamine-inositol phospholipid moiety is cleaved off and the GPI-modified mannoprotein is covalently attached via its lipidless GPI glycan remnant to the 1,6-beta-glucan of the outer cell wall layer.

Its subcellular location is the cell membrane. It is found in the secreted. It localises to the cell wall. Functionally, cell surface adhesion protein which mediates both yeast-to-host tissue adherence and yeast aggregation. Plays an important role in the pathogenesis of C.albicans infections. In Candida albicans (strain SC5314 / ATCC MYA-2876) (Yeast), this protein is Agglutinin-like protein 6 (ALS6).